Consider the following 115-residue polypeptide: Large ribosomal subunit protein bL20 (115 aa).

It belongs to the bacterial ribosomal protein bL20 family.

Functionally, binds directly to 23S ribosomal RNA and is necessary for the in vitro assembly process of the 50S ribosomal subunit. It is not involved in the protein synthesizing functions of that subunit. This Prochlorococcus marinus (strain SARG / CCMP1375 / SS120) protein is Large ribosomal subunit protein bL20.